We begin with the raw amino-acid sequence, 301 residues long: Homoserine O-acetyltransferase (301 aa).

Residue Cys142 is the Acyl-thioester intermediate of the active site. Residues Lys163 and Ser192 each coordinate substrate. His235 (proton acceptor) is an active-site residue. Residue Glu237 is part of the active site. Position 249 (Arg249) interacts with substrate.

It belongs to the MetA family.

Its subcellular location is the cytoplasm. It catalyses the reaction L-homoserine + acetyl-CoA = O-acetyl-L-homoserine + CoA. It participates in amino-acid biosynthesis; L-methionine biosynthesis via de novo pathway; O-acetyl-L-homoserine from L-homoserine: step 1/1. Its function is as follows. Transfers an acetyl group from acetyl-CoA to L-homoserine, forming acetyl-L-homoserine. The protein is Homoserine O-acetyltransferase of Clostridium acetobutylicum (strain ATCC 824 / DSM 792 / JCM 1419 / IAM 19013 / LMG 5710 / NBRC 13948 / NRRL B-527 / VKM B-1787 / 2291 / W).